Reading from the N-terminus, the 327-residue chain is Protein CONSERVED IN THE GREEN LINEAGE AND DIATOMS 27, chloroplastic (327 aa).

Residues 1–59 (MLRLIVNYPLIPKISHRVCSNSSSKLGSYYDSSSIIKYGGISDVVGKKQELFLSVSVKA) constitute a chloroplast transit peptide. The interval 66–88 (NGGGSMSFSGQSWDPSSEIEVPS) is disordered. 3 helical membrane-spanning segments follow: residues 119–139 (LGGL…AASF), 148–168 (FILA…LRIY), and 225–245 (LIGT…ATPV).

As to expression, mostly expressed in seeds, leaves and flowers, and, to a lower extent, in roots.

Its subcellular location is the membrane. The protein resides in the plastid. It localises to the chloroplast. Its function is as follows. Required for growth in low iron conditions. This is Protein CONSERVED IN THE GREEN LINEAGE AND DIATOMS 27, chloroplastic from Arabidopsis thaliana (Mouse-ear cress).